The chain runs to 161 residues: Nucleotide-binding protein Dtpsy_2240 (161 aa).

It belongs to the YajQ family.

In terms of biological role, nucleotide-binding protein. The chain is Nucleotide-binding protein Dtpsy_2240 from Acidovorax ebreus (strain TPSY) (Diaphorobacter sp. (strain TPSY)).